The following is a 614-amino-acid chain: Chaperone protein DnaK (614 aa).

At T175 the chain carries Phosphothreonine; by autocatalysis. The tract at residues 577-614 (QAGGAEGAADPNAAAGGAQSAPHDDNVVDADFKVDEDK) is disordered. Residues 583–597 (GAADPNAAAGGAQSA) are compositionally biased toward low complexity. Residues 598–614 (PHDDNVVDADFKVDEDK) are compositionally biased toward basic and acidic residues.

Belongs to the heat shock protein 70 family.

Acts as a chaperone. The polypeptide is Chaperone protein DnaK (Clostridium beijerinckii (strain ATCC 51743 / NCIMB 8052) (Clostridium acetobutylicum)).